The primary structure comprises 278 residues: Pyrroline-5-carboxylate reductase 2 (278 aa).

Belongs to the pyrroline-5-carboxylate reductase family.

It is found in the cytoplasm. The catalysed reaction is L-proline + NADP(+) = (S)-1-pyrroline-5-carboxylate + NADPH + 2 H(+). The enzyme catalyses L-proline + NAD(+) = (S)-1-pyrroline-5-carboxylate + NADH + 2 H(+). It participates in amino-acid biosynthesis; L-proline biosynthesis; L-proline from L-glutamate 5-semialdehyde: step 1/1. Functionally, catalyzes the reduction of 1-pyrroline-5-carboxylate (PCA) to L-proline. The protein is Pyrroline-5-carboxylate reductase 2 (proI) of Bacillus subtilis (strain 168).